A 397-amino-acid chain; its full sequence is Acetate kinase (397 aa).

Asn8 provides a ligand contact to Mg(2+). Lys15 is an ATP binding site. Position 89 (Arg89) interacts with substrate. Asp146 functions as the Proton donor/acceptor in the catalytic mechanism. ATP is bound by residues His206–Gly210, Asp283–Arg285, and Gly331–Asn335. Glu383 contributes to the Mg(2+) binding site.

The protein belongs to the acetokinase family. Homodimer. Mg(2+) serves as cofactor. Requires Mn(2+) as cofactor.

It is found in the cytoplasm. It catalyses the reaction acetate + ATP = acetyl phosphate + ADP. Its pathway is metabolic intermediate biosynthesis; acetyl-CoA biosynthesis; acetyl-CoA from acetate: step 1/2. In terms of biological role, catalyzes the formation of acetyl phosphate from acetate and ATP. Can also catalyze the reverse reaction. The chain is Acetate kinase from Streptococcus agalactiae serotype Ia (strain ATCC 27591 / A909 / CDC SS700).